The following is a 224-amino-acid chain: Thylakoid lumenal 15 kDa protein 1, chloroplastic (224 aa).

A chloroplast-targeting transit peptide spans 1-34; the sequence is MVILSNVSLFSCCNISQKPSLFSPSSRSSHCPIR. The transit peptide at 35-81 directs the protein to the thylakoid; sequence CSQSQEGKEVVTSPLRSVVWSLGEEVSKRSLFALVSASLFFVDPALA. 2 consecutive Pentapeptide repeat domains span residues 116–155 and 156–196; these read SILR…DFSL and ANVT…PLRD.

It localises to the plastid. The protein localises to the chloroplast thylakoid lumen. The sequence is that of Thylakoid lumenal 15 kDa protein 1, chloroplastic from Arabidopsis thaliana (Mouse-ear cress).